The following is a 101-amino-acid chain: Large ribosomal subunit protein bL25 (101 aa).

The protein belongs to the bacterial ribosomal protein bL25 family. As to quaternary structure, part of the 50S ribosomal subunit; part of the 5S rRNA/L5/L18/L25 subcomplex. Contacts the 5S rRNA. Binds to the 5S rRNA independently of L5 and L18.

In terms of biological role, this is one of the proteins that binds to the 5S RNA in the ribosome where it forms part of the central protuberance. In Thermosynechococcus vestitus (strain NIES-2133 / IAM M-273 / BP-1), this protein is Large ribosomal subunit protein bL25.